The primary structure comprises 575 residues: Transcription factor collier (575 aa).

Residues 79–82 (RKSN) form an interaction with DNA region. Residues 167 to 186 (CRVLLTHEVMCSRCCDKKSC) form a C5-type zinc finger. Interaction with DNA stretches follow at residues 213 to 220 (NCLKNAGN) and 252 to 255 (NNSK). A disordered region spans residues 255–278 (KHGRRAKRLDTTEGTGNTSLSISG). A compositionally biased stretch (polar residues) spans 266–276 (TEGTGNTSLSI). Positions 299 to 382 (PCIKAISPSE…KGSPGRFVYV (84 aa)) constitute an IPT/TIG domain. Disordered regions lie at residues 456–492 (GQWT…GSYG) and 546–575 (AATA…AAAV). Residues 479–492 (SSASTPHSSGGSYG) show a composition bias toward low complexity. The span at 546 to 557 (AATAHPHHHYPH) shows a compositional bias: basic residues. Residues 561 to 575 (PWHNPAVSAATAAAV) show a composition bias toward low complexity.

It belongs to the COE family. As to expression, its expression at the blastoderm stage is restricted to a single stripe of cells corresponding to part of the intercalary and mandibular segment primordia, possibly parasegment O.

It localises to the nucleus. Functionally, may act as a 'second-level regulator' of head patterning. Required for establishment of the PS(-1)/PS0 parasegmental border and formation of the intercalary segment. Required for expression of the segment polarity genes hedgehog, engrailed and wingless, and the segment-identity genes CAP and collar in the intercalary segment. Required at the onset of the gastrulation for the correct formation of the mandibular segment. The chain is Transcription factor collier (kn) from Drosophila melanogaster (Fruit fly).